The following is a 186-amino-acid chain: ADP-ribosylation factor-like protein 8B (186 aa).

The segment at residues 1-19 is an intramembrane region (note=Mediates targeting to membranes); sequence MLALISRLLDWFRSLFWKE. GTP is bound by residues 29 to 35, 71 to 75, and 130 to 133; these read QYSGKTT, DIGGQ, and NKRD. Lys141 is covalently cross-linked (Glycyl lysine isopeptide (Lys-Gly) (interchain with G-Cter in ubiquitin)).

This sequence belongs to the small GTPase superfamily. Arf family. In terms of assembly, interacts with tubulin. Interacts with BORCS5; recruits ARL8B to lysosomes. Interacts with VPS41; the interaction mediates the recruitment of the HOPS complex to lysosomes. Interacts (GTP-bound form) with PLEKHM2 (via RUN domain); the interaction is required to recruit the motor protein kinesin-1 on lysosomes. Interacts (GTP-bound form) with PLEKHM1 (via RUN domain); the interaction is required for PLEKHM1 localization to lysosomes and for ARL8B function in delivery and degradation of endocytic and autophagic cargo in lysosomes. PLEKHM1 and PLEKHM2 compete for interaction with ARL8B. Interacts (GTP-bound form) with RUFY1; the interaction is required for RUFY1 endosomal location. When GTP-bound, interacts with RUFY3 and RUFY4, but not with RUFY1, nor RUFY2. Post-translationally, ubiquitinated at Lys-141 by RNF167, leading to its degradation.

The protein localises to the late endosome membrane. Its subcellular location is the lysosome membrane. It is found in the cytoplasm. It localises to the cytoskeleton. The protein resides in the spindle. The protein localises to the cell projection. Its subcellular location is the axon. It is found in the synapse. It localises to the cytolytic granule membrane. The protein resides in the early endosome membrane. The enzyme catalyses GTP + H2O = GDP + phosphate + H(+). Small GTPase which cycles between active GTP-bound and inactive GDP-bound states. In its active state, binds to a variety of effector proteins playing a key role in the regulation of lysosomal positioning which is important for nutrient sensing, natural killer cell-mediated cytotoxicity and antigen presentation. Along with its effectors, orchestrates lysosomal transport and fusion. Localizes specifically to lysosomal membranes and mediates anterograde lysosomal motility by recruiting PLEKHM2, which in turn recruits the motor protein kinesin-1 on lysosomes. Required for lysosomal and cytolytic granule exocytosis. Critical factor involved in NK cell-mediated cytotoxicity. Drives the polarization of cytolytic granules and microtubule-organizing centers (MTOCs) toward the immune synapse between effector NK lymphocytes and target cells. In neurons, mediates the anterograde axonal long-range transport of presynaptic lysosome-related vesicles required for presynaptic biogenesis and synaptic function. Also acts as a regulator of endosome to lysosome trafficking pathways of special significance for host defense. Recruits RUFY1 onto early endosomes regulating endosomes to trans-Golgi network proteins retrieval. Regulates cargo trafficking to lysosomes by binding to PLEKHM1 and recruiting the HOPS subunit VPS41, resulting in functional assembly of the HOPS complex on lysosomal membranes. Plays an important role in cargo delivery to lysosomes for antigen presentation and microbial killing. Directs the intersection of CD1d with lipid antigens in lysosomes, and plays a role in intersecting phagosomes with lysosomes to generate phagolysosomes that kill microbes. Involved in the process of MHC II presentation. Regulates the delivery of antigens to lysosomes and the formation of MHC II-peptide complexes through the recruitment of the HOPS complex to lysosomes allowing the fusion of late endosomes to lysosomes. May play a role in chromosome segregation. This Pongo abelii (Sumatran orangutan) protein is ADP-ribosylation factor-like protein 8B (ARL8B).